We begin with the raw amino-acid sequence, 255 residues long: tRNA (guanine-N(1)-)-methyltransferase (255 aa).

Residues Gly-113 and 133–138 contribute to the S-adenosyl-L-methionine site; that span reads IGDYVL.

The protein belongs to the RNA methyltransferase TrmD family. In terms of assembly, homodimer.

It is found in the cytoplasm. The catalysed reaction is guanosine(37) in tRNA + S-adenosyl-L-methionine = N(1)-methylguanosine(37) in tRNA + S-adenosyl-L-homocysteine + H(+). Specifically methylates guanosine-37 in various tRNAs. This Escherichia coli O127:H6 (strain E2348/69 / EPEC) protein is tRNA (guanine-N(1)-)-methyltransferase.